We begin with the raw amino-acid sequence, 464 residues long: MEFLPLFHNLRGSRVLVVGGGEIALRKSRLIADAGAVLRVVAPEIETQLRELVAHSGGELILRGYSESDLDGCVLIIAATDDEPLNAQVSRDARLRCVPVNVVDAPALCTVIFPAIVDRSPLVIAVSSGGDAPVLARLIRAKLETWIPSSYGQLAGLAARFRNQVKGLLPNVQQRRAFWEEVFQGAIADRQLAGQGAEAERLLIAKIAGEPPAQTGEVYLVGAGPGDPDLLTFRALRLMQQADVVLYDRLVAPTILDLCRRDAERVYVGKRRAEHAVPQEQINQQLVALAKQGKRVVRLKGGDPFIFGRGGEEIEELAAHGIPFQVVPGITAASGCAAYAGIPLTHRDHAQSVRFITGHLKNGTTDLPWSDLVAPAQTLVFYMGLIGLPVICAELIKHGRSADTPAALVQQGTTVNQRVFTGTLANLPQLVAEHEVHAPTLVIIGEVVKLREKLAWFEGAQATL.

A precorrin-2 dehydrogenase /sirohydrochlorin ferrochelatase region spans residues 1–203 (MEFLPLFHNL…GQGAEAERLL (203 aa)). Residues 22–23 (EI) and 43–44 (PE) each bind NAD(+). Residue S128 is modified to Phosphoserine. The uroporphyrinogen-III C-methyltransferase stretch occupies residues 216-464 (GEVYLVGAGP…AWFEGAQATL (249 aa)). Position 225 (P225) interacts with S-adenosyl-L-methionine. The active-site Proton acceptor is D248. Catalysis depends on K270, which acts as the Proton donor. S-adenosyl-L-methionine is bound by residues 301–303 (GGD), I306, 331–332 (TA), M383, and G412.

This sequence in the N-terminal section; belongs to the precorrin-2 dehydrogenase / sirohydrochlorin ferrochelatase family. The protein in the C-terminal section; belongs to the precorrin methyltransferase family.

The catalysed reaction is uroporphyrinogen III + 2 S-adenosyl-L-methionine = precorrin-2 + 2 S-adenosyl-L-homocysteine + H(+). It catalyses the reaction precorrin-2 + NAD(+) = sirohydrochlorin + NADH + 2 H(+). It carries out the reaction siroheme + 2 H(+) = sirohydrochlorin + Fe(2+). It participates in cofactor biosynthesis; adenosylcobalamin biosynthesis; precorrin-2 from uroporphyrinogen III: step 1/1. It functions in the pathway cofactor biosynthesis; adenosylcobalamin biosynthesis; sirohydrochlorin from precorrin-2: step 1/1. The protein operates within porphyrin-containing compound metabolism; siroheme biosynthesis; precorrin-2 from uroporphyrinogen III: step 1/1. Its pathway is porphyrin-containing compound metabolism; siroheme biosynthesis; siroheme from sirohydrochlorin: step 1/1. It participates in porphyrin-containing compound metabolism; siroheme biosynthesis; sirohydrochlorin from precorrin-2: step 1/1. Functionally, multifunctional enzyme that catalyzes the SAM-dependent methylations of uroporphyrinogen III at position C-2 and C-7 to form precorrin-2 via precorrin-1. Then it catalyzes the NAD-dependent ring dehydrogenation of precorrin-2 to yield sirohydrochlorin. Finally, it catalyzes the ferrochelation of sirohydrochlorin to yield siroheme. This chain is Siroheme synthase, found in Pseudomonas syringae pv. tomato (strain ATCC BAA-871 / DC3000).